The chain runs to 381 residues: Acetylornithine deacetylase (381 aa).

His-79 contacts Zn(2+). Residue Asp-81 is part of the active site. Asp-111 serves as a coordination point for Zn(2+). Glu-143 is a catalytic residue. Residues Glu-144, Glu-168, and His-354 each coordinate Zn(2+).

It belongs to the peptidase M20A family. ArgE subfamily. In terms of assembly, homodimer. Zn(2+) serves as cofactor. The cofactor is Co(2+). It depends on glutathione as a cofactor.

The protein resides in the cytoplasm. The catalysed reaction is N(2)-acetyl-L-ornithine + H2O = L-ornithine + acetate. The protein operates within amino-acid biosynthesis; L-arginine biosynthesis; L-ornithine from N(2)-acetyl-L-ornithine (linear): step 1/1. Functionally, catalyzes the hydrolysis of the amide bond of N(2)-acetylated L-amino acids. Cleaves the acetyl group from N-acetyl-L-ornithine to form L-ornithine, an intermediate in L-arginine biosynthesis pathway, and a branchpoint in the synthesis of polyamines. The protein is Acetylornithine deacetylase of Buchnera aphidicola subsp. Acyrthosiphon pisum (strain Tuc7).